We begin with the raw amino-acid sequence, 92 residues long: Putative protein pog (92 aa).

The sequence is that of Putative protein pog from Acute bee paralysis virus (strain Rothamsted) (ABPV).